We begin with the raw amino-acid sequence, 233 residues long: AA9 family lytic polysaccharide monooxygenase A (233 aa).

Residues 1–17 form the signal peptide; sequence MKLTTSVALLAAAGAQA. Cu(2+)-binding residues include His18 and His90. Intrachain disulfides connect Cys59–Cys180 and Cys150–Cys233. N-linked (GlcNAc...) asparagine glycosylation occurs at Asn132. O2-binding residues include His166 and Gln175. Tyr177 lines the Cu(2+) pocket.

This sequence belongs to the polysaccharide monooxygenase AA9 family. The cofactor is Cu(2+).

The protein localises to the secreted. The enzyme catalyses [(1-&gt;4)-beta-D-glucosyl]n+m + reduced acceptor + O2 = 4-dehydro-beta-D-glucosyl-[(1-&gt;4)-beta-D-glucosyl]n-1 + [(1-&gt;4)-beta-D-glucosyl]m + acceptor + H2O.. In terms of biological role, lytic polysaccharide monooxygenase (LPMO) that depolymerizes crystalline and amorphous polysaccharides via the oxidation of scissile alpha- or beta-(1-4)-glycosidic bonds, yielding C1 and C4 oxidation products. Catalysis by LPMOs requires the reduction of the active-site copper from Cu(II) to Cu(I) by a reducing agent and H(2)O(2) or O(2) as a cosubstrate. Shows endoglucanase activity on tamarind xyloglucan, as well as on beechwood xylan when combined with phosphoric acid swollen cellulose (PASC). Shows no activity on wheat arabinoxylan, konjac glucomannan, acetylated spruce galactoglucomannan, or cellopentaose. This Thermothielavioides terrestris (strain ATCC 38088 / NRRL 8126) (Thielavia terrestris) protein is AA9 family lytic polysaccharide monooxygenase A.